A 335-amino-acid chain; its full sequence is Biotin synthase (335 aa).

Residues 46 to 274 (YNIQLASLFS…KSKIRLSAGR (229 aa)) form the Radical SAM core domain. [4Fe-4S] cluster contacts are provided by cysteine 61, cysteine 65, and cysteine 68. [2Fe-2S] cluster-binding residues include cysteine 105, cysteine 137, cysteine 197, and arginine 269.

This sequence belongs to the radical SAM superfamily. Biotin synthase family. As to quaternary structure, homodimer. The cofactor is [4Fe-4S] cluster. [2Fe-2S] cluster is required as a cofactor.

The catalysed reaction is (4R,5S)-dethiobiotin + (sulfur carrier)-SH + 2 reduced [2Fe-2S]-[ferredoxin] + 2 S-adenosyl-L-methionine = (sulfur carrier)-H + biotin + 2 5'-deoxyadenosine + 2 L-methionine + 2 oxidized [2Fe-2S]-[ferredoxin]. The protein operates within cofactor biosynthesis; biotin biosynthesis; biotin from 7,8-diaminononanoate: step 2/2. Functionally, catalyzes the conversion of dethiobiotin (DTB) to biotin by the insertion of a sulfur atom into dethiobiotin via a radical-based mechanism. The polypeptide is Biotin synthase (Prochlorococcus marinus (strain MIT 9312)).